A 393-amino-acid chain; its full sequence is MFNNHEIDTILSTLRMEADPSLHPLFEQFEKFYEEKLWFQLSESLTKFFDDAKSTPLRLRLYDNFVSKFYDKINQLSVVKYLLASLKDSKDFDESLKYLDDLKAQFQELDSKKQRNNGSKDHGDGILLIDSEIARTYLLKNDLVKARDLLDDLEKTLDKKDSIPLRITNSFYSTNSQYFKFKNDFNSFYYTSLLYLSTLEPSTSITLAERQQLAYDLSISALLGDKIYNFGELLHHPIMETIVNDSNYDWLFQLLNALTVGDFDKFDSLIKVQISKIPILAQHESFLRQKICLMTLIETVFVKNIRMLSFEDISKATHLPKDNVEHLVMRAISLGLLKGSIDQVNELVTISWVQPRIISGDQITKMKDRLVEWNDQVEKLGKKMEARGQSIWV.

Residues 187–355 (SFYYTSLLYL…ELVTISWVQP (169 aa)) form the PCI domain.

It belongs to the proteasome subunit S11 family.

In terms of biological role, acts as a regulatory subunit of the 26S proteasome which is involved in the ATP-dependent degradation of ubiquitinated proteins. This is 26S proteasome regulatory subunit RPN9 (RPN9) from Saccharomyces cerevisiae (strain ATCC 204508 / S288c) (Baker's yeast).